Reading from the N-terminus, the 60-residue chain is Large ribosomal subunit protein bL32 (60 aa).

The span at 1–23 (MAKHPVPKKKTSKARRDARRSHH) shows a compositional bias: basic residues. A disordered region spans residues 1–30 (MAKHPVPKKKTSKARRDARRSHHALTPPTL).

As to quaternary structure, part of the 50S ribosomal subunit.

Found on the solvent side of the large subunit. This chain is Large ribosomal subunit protein bL32 (rpmF), found in Thermus thermophilus (strain ATCC 27634 / DSM 579 / HB8).